A 466-amino-acid chain; its full sequence is Glycine--tRNA ligase (466 aa).

Residues R104 and E178 each contribute to the substrate site. Residues 210–212 (RNE), 220–225 (FRTREF), 294–295 (EL), and 338–341 (GADR) contribute to the ATP site. A substrate-binding site is contributed by 225-229 (FEQME). Residue 334 to 338 (EPSLG) coordinates substrate.

The protein belongs to the class-II aminoacyl-tRNA synthetase family. As to quaternary structure, homodimer.

It is found in the cytoplasm. It catalyses the reaction tRNA(Gly) + glycine + ATP = glycyl-tRNA(Gly) + AMP + diphosphate. Catalyzes the attachment of glycine to tRNA(Gly). The polypeptide is Glycine--tRNA ligase (Geobacillus thermodenitrificans (strain NG80-2)).